The primary structure comprises 356 residues: Uroporphyrinogen decarboxylase (356 aa).

Substrate contacts are provided by residues Arg-27–Arg-31, Asp-77, Tyr-154, Thr-209, and His-327.

This sequence belongs to the uroporphyrinogen decarboxylase family. In terms of assembly, homodimer.

Its subcellular location is the cytoplasm. It catalyses the reaction uroporphyrinogen III + 4 H(+) = coproporphyrinogen III + 4 CO2. Its pathway is porphyrin-containing compound metabolism; protoporphyrin-IX biosynthesis; coproporphyrinogen-III from 5-aminolevulinate: step 4/4. Catalyzes the decarboxylation of four acetate groups of uroporphyrinogen-III to yield coproporphyrinogen-III. The sequence is that of Uroporphyrinogen decarboxylase from Hamiltonella defensa subsp. Acyrthosiphon pisum (strain 5AT).